The following is a 198-amino-acid chain: Probable GTP-binding protein EngB (198 aa).

The EngB-type G domain occupies 36–198 (SDPQFAFIGR…NLSKLQELLE (163 aa)). GTP contacts are provided by residues 44–51 (GRSNVGKS), 70–74 (GRTQL), 88–91 (DLPG), 155–158 (NKID), and 182–184 (ISA). Mg(2+) is bound by residues Ser51 and Thr72.

It belongs to the TRAFAC class TrmE-Era-EngA-EngB-Septin-like GTPase superfamily. EngB GTPase family. Mg(2+) serves as cofactor.

In terms of biological role, necessary for normal cell division and for the maintenance of normal septation. This Mesomycoplasma hyopneumoniae (strain 7448) (Mycoplasma hyopneumoniae) protein is Probable GTP-binding protein EngB.